We begin with the raw amino-acid sequence, 185 residues long: Probable dehydrin LEA (185 aa).

2 stretches are compositionally biased toward basic and acidic residues: residues 1-10 (MADLRDEKGN) and 44-55 (QHKESTTSDIAE). The tract at residues 1 to 185 (MADLRDEKGN…LPGHHNHNHP (185 aa)) is disordered. A compositionally biased stretch (low complexity) spans 67 to 94 (AAAPAGAGAATAATATGVSAGTGATTTG). Over residues 130–146 (KEKIKEKFGSGKHKDEQ) the composition is skewed to basic and acidic residues. Over residues 147-159 (TPATATTTGPATT) the composition is skewed to low complexity. The span at 161 to 177 (QPHEKKGILEKIKDKLP) shows a compositional bias: basic and acidic residues.

Belongs to the plant dehydrin family.

This Arabidopsis thaliana (Mouse-ear cress) protein is Probable dehydrin LEA (LEA).